Reading from the N-terminus, the 1029-residue chain is DNA repair protein RAD5A (1029 aa).

The disordered stretch occupies residues 83-104 (SVGANHRVEEENESVNGGGEES). In terms of domain architecture, Helicase ATP-binding spans 406–622 (PSTLQMARGG…YSLLRFLRIE (217 aa)). 419–426 (DAMGLGKT) serves as a coordination point for ATP. Positions 573–576 (DEAH) match the DEAH box motif. Residues 794–834 (CPICLEALEDAVLTPCAHRLCRECLLASWRNSTSGLCPVCR) form an RING-type zinc finger. The region spanning 864-1029 (KITALLEELE…RIEELKMLFT (166 aa)) is the Helicase C-terminal domain.

It belongs to the SNF2/RAD54 helicase family. RAD16 subfamily.

The protein resides in the nucleus. In terms of biological role, functions in error-free postreplication DNA repair or DNA-damage tolerance (DTT) pathway. Required for homologous recombination (HR) induced by DNA double-strand break (DSB) in somatic cells. Required for damage-induced DNA repair, independently of MUS81 and RECQL4A. Plays a role in synthesis-dependent strand annealing (SDSA) but not in single-strand annealing (SSA). Possesses double-stranded DNA-dependent ATPase activity. Is able to regress replication forks with preference for forks with a leading strand gap. Is able to catalyze branch migration of Holliday junctions and is unaffected by protein blockades. This chain is DNA repair protein RAD5A, found in Arabidopsis thaliana (Mouse-ear cress).